The sequence spans 276 residues: NH(3)-dependent NAD(+) synthetase (276 aa).

43–50 (GISGGVDS) provides a ligand contact to ATP. Residue aspartate 49 participates in Mg(2+) binding. Position 146 (arginine 146) interacts with deamido-NAD(+). Threonine 166 contributes to the ATP binding site. Residue glutamate 171 participates in Mg(2+) binding. The deamido-NAD(+) site is built by lysine 179 and aspartate 186. ATP contacts are provided by lysine 195 and threonine 217. Deamido-NAD(+) is bound at residue 266–267 (HK).

Belongs to the NAD synthetase family. As to quaternary structure, homodimer.

It catalyses the reaction deamido-NAD(+) + NH4(+) + ATP = AMP + diphosphate + NAD(+) + H(+). The protein operates within cofactor biosynthesis; NAD(+) biosynthesis; NAD(+) from deamido-NAD(+) (ammonia route): step 1/1. Its function is as follows. Catalyzes the ATP-dependent amidation of deamido-NAD to form NAD. Uses ammonia as a nitrogen source. In Aliivibrio fischeri (strain MJ11) (Vibrio fischeri), this protein is NH(3)-dependent NAD(+) synthetase.